The following is an 858-amino-acid chain: Leucine--tRNA ligase (858 aa).

The 'HIGH' region signature appears at Pro-42–His-52. The 'KMSKS' region signature appears at Lys-618–Ser-622. ATP is bound at residue Lys-621.

This sequence belongs to the class-I aminoacyl-tRNA synthetase family.

Its subcellular location is the cytoplasm. The enzyme catalyses tRNA(Leu) + L-leucine + ATP = L-leucyl-tRNA(Leu) + AMP + diphosphate. The sequence is that of Leucine--tRNA ligase from Aliivibrio salmonicida (strain LFI1238) (Vibrio salmonicida (strain LFI1238)).